We begin with the raw amino-acid sequence, 289 residues long: Zinc finger matrin-type protein 3 (289 aa).

2 consecutive Matrin-type zinc fingers follow at residues 70–100 and 147–177; these read LFCK…KLRN and DYCK…RLRL. Disordered stretches follow at residues 180-202 and 265-289; these read AQSH…EGSE and ESKQ…GYVQ. A Matrin-type 3 zinc finger spans residues 245-275; the sequence is FYCSMCNVGAGEEVEFRQHLESKQHKSKVSE. Over residues 265–282 the composition is skewed to basic and acidic residues; it reads ESKQHKSKVSEQRYRSEM.

Interacts with dsRNA. As to expression, highly expressed in brain, gut, lung, and testis.

It localises to the nucleus. Its subcellular location is the nucleolus. In terms of biological role, acts as a bona fide target gene of p53/TP53. May play a role in the TP53-dependent growth regulatory pathway. May contribute to TP53-mediated apoptosis by regulation of TP53 expression and translocation to the nucleus and nucleolus. The protein is Zinc finger matrin-type protein 3 of Rattus norvegicus (Rat).